The sequence spans 160 residues: Eukaryotic translation initiation factor 5A (160 aa).

Residues 1 to 12 (MSDEEHHFESKA) are compositionally biased toward basic and acidic residues. A disordered region spans residues 1-21 (MSDEEHHFESKADAGASKTFP). The residue at position 52 (Lys-52) is a Hypusine.

It belongs to the eIF-5A family. In terms of processing, lys-53 undergoes hypusination, a unique post-translational modification that consists in the addition of a butylamino group from spermidine to lysine side chain, leading to the formation of the unusual amino acid hypusine. eIF-5As are the only known proteins to undergo this modification, which is essential for their function.

Its function is as follows. Translation factor that promotes translation elongation and termination, particularly upon ribosome stalling at specific amino acid sequence contexts. Binds between the exit (E) and peptidyl (P) site of the ribosome and promotes rescue of stalled ribosome: specifically required for efficient translation of polyproline-containing peptides as well as other motifs that stall the ribosome. Acts as a ribosome quality control (RQC) cofactor by joining the RQC complex to facilitate peptidyl transfer during CAT tailing step. This chain is Eukaryotic translation initiation factor 5A, found in Manihot esculenta (Cassava).